The following is a 338-amino-acid chain: Anthranilate phosphoribosyltransferase (338 aa).

5-phospho-alpha-D-ribose 1-diphosphate is bound by residues Gly-80, 83-84, Thr-88, 90-93, 108-116, and Ser-120; these read GD, NIST, and KHGNRSVSS. Gly-80 is a binding site for anthranilate. Ser-92 serves as a coordination point for Mg(2+). An anthranilate-binding site is contributed by Asn-111. Residue Arg-166 coordinates anthranilate. Residues Asp-225 and Glu-226 each coordinate Mg(2+).

It belongs to the anthranilate phosphoribosyltransferase family. Homodimer. Mg(2+) is required as a cofactor.

The catalysed reaction is N-(5-phospho-beta-D-ribosyl)anthranilate + diphosphate = 5-phospho-alpha-D-ribose 1-diphosphate + anthranilate. It functions in the pathway amino-acid biosynthesis; L-tryptophan biosynthesis; L-tryptophan from chorismate: step 2/5. Functionally, catalyzes the transfer of the phosphoribosyl group of 5-phosphorylribose-1-pyrophosphate (PRPP) to anthranilate to yield N-(5'-phosphoribosyl)-anthranilate (PRA). The protein is Anthranilate phosphoribosyltransferase of Desulfatibacillum aliphaticivorans.